The chain runs to 556 residues: MNRRLDNDRTIRAPRGRDISAKSWLTEAPLRMLMNNLDPDVAERPSELVVYGGIGRAARDWESFDRITAALRKLEDDETLLIQSGKPVGVFRTHADAPRVLIANSNIVPHWATLDHFNELDRKGLMMYGQMTAGSWIYIGSQGIVQGTYETFVEVGRRHYGGSLAGKWILTAGLGGMGGAQPLAATMAGASMLAVECQPSRIEMRLRTGYLDRQAATLDEALAIMEESAKTKKAISVGLLGNAAEIFPELVRRGVKPDIVTDQTSAHDPINGYLPKGWTLADWEAKRASDPKAVERASKTSMVEHVQAMLDFHAQGIPTLDYGNNIRQMAQDMGLKNAFDFPGFVPAYIRPLFCRGVGPFRWAALSGDPEDIFKTDAKVKELMPDDKHLHNWLDMARERIKFQGLPARICWVGLGDRHRLGLAFNEMVARGELKAPVVIGRDHLDSGSVASPNRETEAMKDGSDAVSDWPLLNALLNCASGATWVSLHHGGGVGIGYSQHAGMVIVADGTPEAAKRIARVLWNDPATGVMRHADAGYDIAIDCARDKGLDLPSLSK.

NAD(+) is bound by residues G52 to G53, Q130, G176 to G178, E196, R201, N242 to A243, Q263 to H267, Y273 to L274, and Y322. C410 is a catalytic residue. G492 serves as a coordination point for NAD(+).

Belongs to the urocanase family. It depends on NAD(+) as a cofactor.

Its subcellular location is the cytoplasm. It carries out the reaction 4-imidazolone-5-propanoate = trans-urocanate + H2O. The protein operates within amino-acid degradation; L-histidine degradation into L-glutamate; N-formimidoyl-L-glutamate from L-histidine: step 2/3. Its function is as follows. Catalyzes the conversion of urocanate to 4-imidazolone-5-propionate. In Bradyrhizobium diazoefficiens (strain JCM 10833 / BCRC 13528 / IAM 13628 / NBRC 14792 / USDA 110), this protein is Urocanate hydratase.